A 252-amino-acid polypeptide reads, in one-letter code: Imidazole glycerol phosphate synthase subunit HisF (252 aa).

Catalysis depends on residues Asp-11 and Asp-130.

Belongs to the HisA/HisF family. As to quaternary structure, heterodimer of HisH and HisF.

The protein localises to the cytoplasm. It carries out the reaction 5-[(5-phospho-1-deoxy-D-ribulos-1-ylimino)methylamino]-1-(5-phospho-beta-D-ribosyl)imidazole-4-carboxamide + L-glutamine = D-erythro-1-(imidazol-4-yl)glycerol 3-phosphate + 5-amino-1-(5-phospho-beta-D-ribosyl)imidazole-4-carboxamide + L-glutamate + H(+). The protein operates within amino-acid biosynthesis; L-histidine biosynthesis; L-histidine from 5-phospho-alpha-D-ribose 1-diphosphate: step 5/9. In terms of biological role, IGPS catalyzes the conversion of PRFAR and glutamine to IGP, AICAR and glutamate. The HisF subunit catalyzes the cyclization activity that produces IGP and AICAR from PRFAR using the ammonia provided by the HisH subunit. This is Imidazole glycerol phosphate synthase subunit HisF from Anoxybacillus flavithermus (strain DSM 21510 / WK1).